Consider the following 264-residue polypeptide: H-2 class II histocompatibility antigen, E-D beta chain (264 aa).

The signal sequence occupies residues 1 to 31 (MVWLPRVPCVAAVILLLTVLSPPVALVRDTR). A beta-1 region spans residues 32-121 (PRFLEYVTSE…ISDKFLVRRR (90 aa)). Over 32-225 (PRFLEYVTSE…KAQSTSAQNK (194 aa)) the chain is Extracellular. Intrachain disulfides connect Cys42–Cys106 and Cys144–Cys200. An N-linked (GlcNAc...) asparagine glycan is attached at Asn46. The interval 122–215 (VEPTVTVYPT…SLTDPVTVEW (94 aa)) is beta-2. Residues 124–214 (PTVTVYPTKT…PSLTDPVTVE (91 aa)) form the Ig-like C1-type domain. Residues 216–225 (KAQSTSAQNK) form a connecting peptide region. The chain crosses the membrane as a helical span at residues 226 to 248 (MLSGVGGFVLGLLFLGAGLFIYF). Topologically, residues 249–264 (RNQKGQSGLQPTGLLS) are cytoplasmic.

This sequence belongs to the MHC class II family.

Its subcellular location is the membrane. The chain is H-2 class II histocompatibility antigen, E-D beta chain from Mus musculus (Mouse).